The following is a 589-amino-acid chain: Transmembrane 9 superfamily member 1 (589 aa).

The first 27 residues, 1–27 (MTVLGHPRSWSCHCLPVLILLLGIGHG), serve as a signal peptide directing secretion. Asparagine 178 carries N-linked (GlcNAc...) asparagine glycosylation. 4 helical membrane passes run 237–257 (LSII…AVIL), 310–330 (VLGV…MALL), 339–359 (GAIN…SGYV), and 373–393 (VWNI…TWSV). A glycan (N-linked (GlcNAc...) asparagine) is linked at asparagine 401. A run of 3 helical transmembrane segments spans residues 412–432 (ILLL…IGGI), 482–502 (GILF…SIAL), and 518–538 (SVLS…FYYA). Asparagine 542 is a glycosylation site (N-linked (GlcNAc...) asparagine). A helical membrane pass occupies residues 552-572 (FFGYSLLTGYVFFLMLGTISF).

This sequence belongs to the nonaspanin (TM9SF) (TC 9.A.2) family.

Its subcellular location is the lysosome membrane. It localises to the cytoplasmic vesicle. The protein resides in the autophagosome membrane. Plays an essential role in autophagy. The protein is Transmembrane 9 superfamily member 1 (Tm9sf1) of Rattus norvegicus (Rat).